Here is a 166-residue protein sequence, read N- to C-terminus: MNVITGRVWKFGDNIDTDLIIPARYLNTSDPHELAKHVMEDADPEFPSKVRPGDIIVAGYNFGSGSSREHAPIALKAAGVAAVIAKSFARIFYRNSFNMGLPIFELLESDEINEGDLIKIDLDNGIIHNVDTGKDYKFTPIPEFMQELIAAGGLINFAKEMLKENK.

It belongs to the LeuD family. LeuD type 2 subfamily. Heterodimer of LeuC and LeuD.

It catalyses the reaction (2R,3S)-3-isopropylmalate = (2S)-2-isopropylmalate. It functions in the pathway amino-acid biosynthesis; L-leucine biosynthesis; L-leucine from 3-methyl-2-oxobutanoate: step 2/4. Its function is as follows. Catalyzes the isomerization between 2-isopropylmalate and 3-isopropylmalate, via the formation of 2-isopropylmaleate. This is 3-isopropylmalate dehydratase small subunit from Nautilia profundicola (strain ATCC BAA-1463 / DSM 18972 / AmH).